The chain runs to 36 residues: Delta-amaurobitoxin-Pl1c (36 aa).

Intrachain disulfides connect C3–C19, C10–C24, C18–C34, and C26–C32.

Expressed by the venom gland.

Its subcellular location is the secreted. Functionally, binds at site 4 of sodium channels (Nav) and inhibits the fast inactivation of cockroach channels. This toxin is active only on insects. Has a potent activity against S.litura larvae. The sequence is that of Delta-amaurobitoxin-Pl1c from Pireneitega luctuosa (Tangled nest spider).